The sequence spans 875 residues: Valine--tRNA ligase (875 aa).

The 'HIGH' region signature appears at 44 to 54 (PNVTGKLHLGH). The 'KMSKS' region signature appears at 520–524 (KMSKS). K523 is a binding site for ATP. Residues 804–875 (LEGLINIEEE…VRARLAQLKQ (72 aa)) adopt a coiled-coil conformation.

This sequence belongs to the class-I aminoacyl-tRNA synthetase family. ValS type 1 subfamily. In terms of assembly, monomer.

Its subcellular location is the cytoplasm. It carries out the reaction tRNA(Val) + L-valine + ATP = L-valyl-tRNA(Val) + AMP + diphosphate. Functionally, catalyzes the attachment of valine to tRNA(Val). As ValRS can inadvertently accommodate and process structurally similar amino acids such as threonine, to avoid such errors, it has a 'posttransfer' editing activity that hydrolyzes mischarged Thr-tRNA(Val) in a tRNA-dependent manner. The protein is Valine--tRNA ligase of Anoxybacillus flavithermus (strain DSM 21510 / WK1).